The following is a 794-amino-acid chain: Phenylalanine--tRNA ligase beta subunit (794 aa).

The region spanning 40–158 is the tRNA-binding domain; that stretch reads NSLNSELVLG…LKKYLGKDVK (119 aa). In terms of domain architecture, B5 spans 402–477; sequence KNKTEFEIKI…RLYSYDNIQE (76 aa). Residues Asp455, Asp461, Glu464, and Glu465 each contribute to the Mg(2+) site. Residues 702–794 enclose the FDX-ACB domain; sequence SKFQSSSRDL…NVKKMKVVIR (93 aa).

The protein belongs to the phenylalanyl-tRNA synthetase beta subunit family. Type 1 subfamily. Tetramer of two alpha and two beta subunits. Mg(2+) is required as a cofactor.

The protein resides in the cytoplasm. The enzyme catalyses tRNA(Phe) + L-phenylalanine + ATP = L-phenylalanyl-tRNA(Phe) + AMP + diphosphate + H(+). The chain is Phenylalanine--tRNA ligase beta subunit from Mycoplasma capricolum subsp. capricolum (strain California kid / ATCC 27343 / NCTC 10154).